We begin with the raw amino-acid sequence, 81 residues long: Costars family protein ABRACL (81 aa).

This sequence belongs to the costars family.

The protein is Costars family protein ABRACL (abracl) of Xenopus laevis (African clawed frog).